A 649-amino-acid polypeptide reads, in one-letter code: L-ornithine N(5)-monooxygenase (649 aa).

FAD-binding positions include 72 to 80 (EKRGHFAWH) and glutamine 91. Lysine 96 is a binding site for substrate. Valine 157 contacts FAD. NADP(+) contacts are provided by residues 289-292 (AGQS) and arginine 314. Substrate is bound by residues 328–331 (NSAA) and asparagine 359. Position 359–361 (359–361 (NYS)) interacts with NADP(+). Residues 512–547 (AMQSDAVRSGKSSPGSGSDASSTSSQQTLASENSTE) are disordered. The span at 520–536 (SGKSSPGSGSDASSTSS) shows a compositional bias: low complexity. A compositionally biased stretch (polar residues) spans 537–547 (QQTLASENSTE). Residue 569–571 (SLL) coordinates FAD. Serine 572 contributes to the substrate binding site. Residues 585 to 611 (LLQRLPRTRRGTASSAATQPAASTVAS) are disordered. Residues 596 to 611 (TASSAATQPAASTVAS) are compositionally biased toward low complexity.

The protein belongs to the lysine N(6)-hydroxylase/L-ornithine N(5)-oxygenase family. In terms of assembly, homotetramer. FAD serves as cofactor.

It catalyses the reaction L-ornithine + NADPH + O2 = N(5)-hydroxy-L-ornithine + NADP(+) + H2O. The catalysed reaction is L-ornithine + NADH + O2 = N(5)-hydroxy-L-ornithine + NAD(+) + H2O. Its pathway is siderophore biosynthesis; ferrichrome biosynthesis. Functionally, catalyzes the conversion of L-ornithine to N(5)-hydroxyornithine, the first step in the biosynthesis of all hydroxamate-containing siderophores, such as ferrichrome. The protein is L-ornithine N(5)-monooxygenase (SID1) of Mycosarcoma maydis (Corn smut fungus).